A 422-amino-acid chain; its full sequence is Gamma-glutamyl phosphate reductase (422 aa).

Belongs to the gamma-glutamyl phosphate reductase family.

It localises to the cytoplasm. It carries out the reaction L-glutamate 5-semialdehyde + phosphate + NADP(+) = L-glutamyl 5-phosphate + NADPH + H(+). Its pathway is amino-acid biosynthesis; L-proline biosynthesis; L-glutamate 5-semialdehyde from L-glutamate: step 2/2. In terms of biological role, catalyzes the NADPH-dependent reduction of L-glutamate 5-phosphate into L-glutamate 5-semialdehyde and phosphate. The product spontaneously undergoes cyclization to form 1-pyrroline-5-carboxylate. The polypeptide is Gamma-glutamyl phosphate reductase (Nitrosomonas europaea (strain ATCC 19718 / CIP 103999 / KCTC 2705 / NBRC 14298)).